A 128-amino-acid polypeptide reads, in one-letter code: UPF0102 protein GSU0650 (128 aa).

Belongs to the UPF0102 family.

This Geobacter sulfurreducens (strain ATCC 51573 / DSM 12127 / PCA) protein is UPF0102 protein GSU0650.